We begin with the raw amino-acid sequence, 358 residues long: Methylthioribose-1-phosphate isomerase (358 aa).

Substrate is bound by residues 54–56, Arg-96, and Gln-205; that span reads RGA. Catalysis depends on Asp-246, which acts as the Proton donor. Residue 256-257 coordinates substrate; sequence SK.

Belongs to the eIF-2B alpha/beta/delta subunits family. MtnA subfamily.

The enzyme catalyses 5-(methylsulfanyl)-alpha-D-ribose 1-phosphate = 5-(methylsulfanyl)-D-ribulose 1-phosphate. Its pathway is amino-acid biosynthesis; L-methionine biosynthesis via salvage pathway; L-methionine from S-methyl-5-thio-alpha-D-ribose 1-phosphate: step 1/6. In terms of biological role, catalyzes the interconversion of methylthioribose-1-phosphate (MTR-1-P) into methylthioribulose-1-phosphate (MTRu-1-P). This is Methylthioribose-1-phosphate isomerase from Pseudomonas putida (strain GB-1).